The sequence spans 413 residues: Histidine--tRNA ligase (413 aa).

It belongs to the class-II aminoacyl-tRNA synthetase family. Homodimer.

It is found in the cytoplasm. It catalyses the reaction tRNA(His) + L-histidine + ATP = L-histidyl-tRNA(His) + AMP + diphosphate + H(+). The sequence is that of Histidine--tRNA ligase from Ehrlichia chaffeensis (strain ATCC CRL-10679 / Arkansas).